Here is a 329-residue protein sequence, read N- to C-terminus: 4-hydroxythreonine-4-phosphate dehydrogenase (329 aa).

Substrate is bound by residues His-136 and Thr-137. The a divalent metal cation site is built by His-166, His-211, and His-266. Residues Lys-274, Asn-283, and Arg-292 each coordinate substrate.

Belongs to the PdxA family. In terms of assembly, homodimer. Requires Zn(2+) as cofactor. Mg(2+) is required as a cofactor. It depends on Co(2+) as a cofactor.

The protein resides in the cytoplasm. It carries out the reaction 4-(phosphooxy)-L-threonine + NAD(+) = 3-amino-2-oxopropyl phosphate + CO2 + NADH. It participates in cofactor biosynthesis; pyridoxine 5'-phosphate biosynthesis; pyridoxine 5'-phosphate from D-erythrose 4-phosphate: step 4/5. In terms of biological role, catalyzes the NAD(P)-dependent oxidation of 4-(phosphooxy)-L-threonine (HTP) into 2-amino-3-oxo-4-(phosphooxy)butyric acid which spontaneously decarboxylates to form 3-amino-2-oxopropyl phosphate (AHAP). The polypeptide is 4-hydroxythreonine-4-phosphate dehydrogenase (Neisseria meningitidis serogroup B (strain ATCC BAA-335 / MC58)).